A 228-amino-acid chain; its full sequence is Lipoprotein-releasing system ATP-binding protein LolD (228 aa).

The ABC transporter domain maps to 6–228 (IKCLNVVKGY…EAGVLNKQGQ (223 aa)). Residue 42 to 49 (GASGSGKS) coordinates ATP.

The protein belongs to the ABC transporter superfamily. Lipoprotein translocase (TC 3.A.1.125) family. The complex is composed of two ATP-binding proteins (LolD) and two transmembrane proteins (LolC and LolE).

The protein localises to the cell inner membrane. Its function is as follows. Part of the ABC transporter complex LolCDE involved in the translocation of mature outer membrane-directed lipoproteins, from the inner membrane to the periplasmic chaperone, LolA. Responsible for the formation of the LolA-lipoprotein complex in an ATP-dependent manner. In Saccharophagus degradans (strain 2-40 / ATCC 43961 / DSM 17024), this protein is Lipoprotein-releasing system ATP-binding protein LolD.